Here is a 481-residue protein sequence, read N- to C-terminus: NADH-quinone oxidoreductase subunit N (481 aa).

A run of 14 helical transmembrane segments spans residues 11-31 (AIPEIWVLTMACVVLLADLFW), 38-58 (LAAVLTVLTLSGAAVLTVFEM), 69-89 (FVLDRFTNVAELFSYLAVLMV), 107-127 (VFVLLLFALLGIMVMVSGGSL), 128-148 (LSVYLGLELLALSQYALVAFY), 162-182 (FVLGALASGLLLYGMSLLYGL), 203-223 (LVLVFAIVFIAAGIAFKLGAA), 237-257 (PTVVTAFLASAPKIGAFALII), 271-291 (WQQIFVALTVVSLVVGNVIAI), 299-319 (MLAYSTIGHVGFMLLGIVAGT), 327-347 (FFYTVVYTLMSLAGFGMILLV), 370-390 (YAFLMMIVMFSMAGVPPTVGF), 401-421 (VAAGYVWLAVVGVLLAVIGAF), and 457-477 (LALLVLGILPGPLMAFCFYAM).

It belongs to the complex I subunit 2 family. NDH-1 is composed of 14 different subunits. Subunits NuoA, H, J, K, L, M, N constitute the membrane sector of the complex.

The protein resides in the cell inner membrane. It carries out the reaction a quinone + NADH + 5 H(+)(in) = a quinol + NAD(+) + 4 H(+)(out). Its function is as follows. NDH-1 shuttles electrons from NADH, via FMN and iron-sulfur (Fe-S) centers, to quinones in the respiratory chain. The immediate electron acceptor for the enzyme in this species is believed to be ubiquinone. Couples the redox reaction to proton translocation (for every two electrons transferred, four hydrogen ions are translocated across the cytoplasmic membrane), and thus conserves the redox energy in a proton gradient. The sequence is that of NADH-quinone oxidoreductase subunit N from Acidithiobacillus ferrooxidans (strain ATCC 23270 / DSM 14882 / CIP 104768 / NCIMB 8455) (Ferrobacillus ferrooxidans (strain ATCC 23270)).